Reading from the N-terminus, the 298-residue chain is Acetylglutamate kinase (298 aa).

Residues 69–70, Arg91, and Asn196 each bind substrate; that span reads GG.

This sequence belongs to the acetylglutamate kinase family. ArgB subfamily.

The protein localises to the cytoplasm. It catalyses the reaction N-acetyl-L-glutamate + ATP = N-acetyl-L-glutamyl 5-phosphate + ADP. Its pathway is amino-acid biosynthesis; L-arginine biosynthesis; N(2)-acetyl-L-ornithine from L-glutamate: step 2/4. Functionally, catalyzes the ATP-dependent phosphorylation of N-acetyl-L-glutamate. The chain is Acetylglutamate kinase from Bradyrhizobium sp. (strain BTAi1 / ATCC BAA-1182).